The following is a 159-amino-acid chain: Transcription elongation factor GreA (159 aa).

A coiled-coil region spans residues Ala-46–Gln-73.

Belongs to the GreA/GreB family.

Necessary for efficient RNA polymerase transcription elongation past template-encoded arresting sites. The arresting sites in DNA have the property of trapping a certain fraction of elongating RNA polymerases that pass through, resulting in locked ternary complexes. Cleavage of the nascent transcript by cleavage factors such as GreA or GreB allows the resumption of elongation from the new 3'terminus. GreA releases sequences of 2 to 3 nucleotides. The sequence is that of Transcription elongation factor GreA from Vesicomyosocius okutanii subsp. Calyptogena okutanii (strain HA).